Reading from the N-terminus, the 875-residue chain is uncharacterized protein (875 aa).

3 disordered regions span residues 29 to 48 (KGNSENLSTNNNPNLTGKNI), 481 to 510 (EQKSHLHSNHNINHEKGSDPSYNLNTKNTK), and 680 to 705 (DKKVNNNQGNKKKNEKKNEKKNDKIN). Residues 31 to 44 (NSENLSTNNNPNLT) are compositionally biased toward low complexity. Over residues 695–705 (KKNEKKNDKIN) the composition is skewed to basic and acidic residues.

This is an uncharacterized protein from Plasmodium falciparum (isolate 3D7).